The sequence spans 169 residues: S-ribosylhomocysteine lyase (169 aa).

Residues His54, His58, and Cys128 each coordinate Fe cation.

This sequence belongs to the LuxS family. In terms of assembly, homodimer. Requires Fe cation as cofactor.

It catalyses the reaction S-(5-deoxy-D-ribos-5-yl)-L-homocysteine = (S)-4,5-dihydroxypentane-2,3-dione + L-homocysteine. In terms of biological role, involved in the synthesis of autoinducer 2 (AI-2) which is secreted by bacteria and is used to communicate both the cell density and the metabolic potential of the environment. The regulation of gene expression in response to changes in cell density is called quorum sensing. Catalyzes the transformation of S-ribosylhomocysteine (RHC) to homocysteine (HC) and 4,5-dihydroxy-2,3-pentadione (DPD). The sequence is that of S-ribosylhomocysteine lyase from Tolumonas auensis (strain DSM 9187 / NBRC 110442 / TA 4).